Here is a 678-residue protein sequence, read N- to C-terminus: Pescadillo homolog (678 aa).

The segment at 265-289 is disordered; it reads PQQQTKTNNTTKKSKSTTAAAAATT. Positions 269-289 are enriched in low complexity; it reads TKTNNTTKKSKSTTAAAAATT. Residues 352-442 form the BRCT domain; the sequence is DVTTLFKGFH…LLLPYSEYTI (91 aa). 2 disordered regions span residues 485-601 and 626-678; these read TNAE…EDTK and ATAN…KQKK. Residues 505–518 are compositionally biased toward acidic residues; it reads SDGESDDEDDEDLE. The segment covering 519-531 has biased composition (basic and acidic residues); it reads HLETRYTEELRKE. The span at 541 to 574 shows a compositional bias: acidic residues; sequence VDDDDEEEEDGEEDGEEEEEEEDGEEESESESES. A coiled-coil region spans residues 581–640; the sequence is VLTKKQRDELNKQKQAEEDTKLAELMIRKKDKWIYNKVKETNQQRATANQTLLEKRNKVE. 2 stretches are compositionally biased toward basic and acidic residues: residues 585-601 and 633-643; these read KQRDELNKQKQAEEDTK and LEKRNKVESGK. The span at 649–678 shows a compositional bias: low complexity; that stretch reads VKVAPQPKKPAPLVKKSQQKQQQASKKQKK.

Belongs to the pescadillo family.

Its subcellular location is the nucleus. It is found in the nucleolus. The protein resides in the nucleoplasm. Functionally, required for maturation of ribosomal RNAs and formation of the large ribosomal subunit. The polypeptide is Pescadillo homolog (Dictyostelium discoideum (Social amoeba)).